Consider the following 433-residue polypeptide: Myricetin 3-O-glucosyl 1,2-rhamnoside 6'-O-caffeoyltransferase AT1 (433 aa).

Catalysis depends on proton acceptor residues His157 and Asp375.

This sequence belongs to the plant acyltransferase family. In terms of tissue distribution, expressed in young cromes.

The enzyme catalyses myricetin 3-O-[beta-D-glucosyl-(1-&gt;2)-alpha-L-rhamnoside] + (E)-caffeoyl-CoA = myricetin 3-O-[(6-O-(E)-caffeoyl-beta-D-glucosyl)-(1-&gt;2)-alpha-L-rhamnoside] + CoA. It participates in flavonoid metabolism. Caffeoyltransferase involved in montbretin A (MbA) biosynthesis. Catalyzes the caffeoylation of myricetin 3-O-beta-D-glucosyl 1,2-alpha-L-rhamnoside (MRG) to produce myricetin 3-O-(6'-O-caffeoyl)-beta-D-glucosyl 1,2-alpha-L-rhamnoside (mini-MbA), a precursor of MbA. Mini-MbA and MbA are potent inhibitors of human pancreatic alpha-amylase and are being developed as drug candidates to treat type-2 diabetes. In vitro, is able to catalyze the caffeoylation of quercetin 3-O-sophoroside (QGG), although QGG may not be a physiological substrate in vivo. In vitro, can use coumaryl-CoA, feruloyl-CoA and acetyl-CoA, although these three acyl donors may not be physiological in vivo. This is Myricetin 3-O-glucosyl 1,2-rhamnoside 6'-O-caffeoyltransferase AT1 from Crocosmia x crocosmiiflora (Montbretia).